A 366-amino-acid chain; its full sequence is uncharacterized protein (366 aa).

The interval 199–267 (QKKQIEDEEK…QLKDAQAKRD (69 aa)) is disordered.

This is an uncharacterized protein from Haemophilus influenzae (strain ATCC 51907 / DSM 11121 / KW20 / Rd).